Here is a 428-residue protein sequence, read N- to C-terminus: MVNKEDVEDELLNETAPVALDEGDIALLKSYGVGPYSKSIRILEEDIKKMTSKVNELCGIKESDTGIGPPSQWDLVVDKTSAHEEPPLQVARCTKIIDVGKPNAKYIITVKQIAKFVVALGDKLSPTDVEEGIRVGVDRNKYQIQIPLPPKIDASVTMMQVEEKPDITYKDVGGCKEQIEKLREVVEMPLLHPEKFVNLGIDPPKGVLMYGPPGTGKTLCARAVANRTDAAFVRVIGSELVQKYVGEGARMVRDLFQMARSKKACIIFFDEVDAIGGARFDDGAGGDNEVQRTMLELINQLDGFDPRGNIKVLMATNRPDTLDPALLRPGRLDRKVEFGLPDLEGRAHIFTIHAKTMSCARDIRFELLARLCPNSTGADIRSVCTEAGMFAIRARRKVVSEKDFLEAIDKVIKSYAKFSATSRYMHYN.

Residue 211–218 (GPPGTGKT) participates in ATP binding.

It belongs to the AAA ATPase family.

The protein resides in the cytoplasm. It localises to the nucleus. Functionally, the 26S proteasome is involved in the ATP-dependent degradation of ubiquitinated proteins. The regulatory (or ATPase) complex confers ATP dependency and substrate specificity to the 26S complex. In Dictyostelium discoideum (Social amoeba), this protein is 26S proteasome regulatory subunit 7 (psmC2).